Here is a 325-residue protein sequence, read N- to C-terminus: ATP phosphoribosyltransferase (325 aa).

This sequence belongs to the ATP phosphoribosyltransferase family. Long subfamily. The cofactor is Mg(2+).

The protein resides in the cytoplasm. The catalysed reaction is 1-(5-phospho-beta-D-ribosyl)-ATP + diphosphate = 5-phospho-alpha-D-ribose 1-diphosphate + ATP. It participates in amino-acid biosynthesis; L-histidine biosynthesis; L-histidine from 5-phospho-alpha-D-ribose 1-diphosphate: step 1/9. With respect to regulation, feedback inhibited by histidine. Catalyzes the condensation of ATP and 5-phosphoribose 1-diphosphate to form N'-(5'-phosphoribosyl)-ATP (PR-ATP). Has a crucial role in the pathway because the rate of histidine biosynthesis seems to be controlled primarily by regulation of HisG enzymatic activity. The sequence is that of ATP phosphoribosyltransferase from Afipia carboxidovorans (strain ATCC 49405 / DSM 1227 / KCTC 32145 / OM5) (Oligotropha carboxidovorans).